The sequence spans 165 residues: Protein AIG2 C (165 aa).

14-19 (YGSILE) contacts substrate. Glutamate 82 (proton acceptor) is an active-site residue.

It belongs to the gamma-glutamylcyclotransferase family. In terms of tissue distribution, expressed in floral organs, leaves, stems and roots.

Functionally, putative gamma-glutamylcyclotransferase. The sequence is that of Protein AIG2 C from Arabidopsis thaliana (Mouse-ear cress).